The sequence spans 495 residues: Leucine aminopeptidase 2 (495 aa).

The signal sequence occupies residues 1–21 (MKSQLLSLAVAVSTISQGVVG). Residues 124-218 (PPANKIMAEL…EDGKNLASLV (95 aa)) enclose the PA domain. N-linked (GlcNAc...) asparagine glycosylation is found at N142 and N235. Zn(2+)-binding residues include H259 and D271. N272 carries an N-linked (GlcNAc...) asparagine glycan. The active-site Proton acceptor is E303. Zn(2+) is bound by residues E304 and D332. The N-linked (GlcNAc...) asparagine glycan is linked to N352. H430 provides a ligand contact to Zn(2+).

This sequence belongs to the peptidase M28 family. M28A subfamily. In terms of assembly, monomer. It depends on Zn(2+) as a cofactor.

It localises to the secreted. Functionally, extracellular aminopeptidase that releases a wide variety of amino acids from natural peptides and contributes to pathogenicity. The protein is Leucine aminopeptidase 2 (LAP2) of Trichophyton equinum (Horse ringworm fungus).